The primary structure comprises 572 residues: MDAQTWPVGFRCLLLLALVGSARSEGVQTCEEVRKLFQWRLLGAVRGLPDSPRAGPDLQVCISKKPTCCTRKMEERYQIAARQDMQQFLQTSSSTLKFLISRNAAAFQETLETLIKQAENYTSILFCSTYRNMALEAAASVQEFFTDVGLYLFGADVNPEEFVNRFFDSLFPLVYNHLINPGVTDSSLEYSECIRMARRDVSPFGNIPQRVMGQMGRSLLPSRTFLQALNLGIEVINTTDYLHFSKECSRALLKMQYCPHCQGLALTKPCMGYCLNVMRGCLAHMAELNPHWHAYIRSLEELSDAMHGTYDIGHVLLNFHLLVNDAVLQAHLNGQKLLEQVNRICGRPVRTPTQSPRCSFDQSKEKHGMKTTTRNSEETLANRRKEFINSLRLYRSFYGGLADQLCANELAAADGLPCWNGEDIVKSYTQRVVGNGIKAQSGNPEVKVKGIDPVINQIIDKLKHVVQLLQGRSPKPDKWELLQLGSGGGMVEQVSGDCDDEDGCGGSGSGEVKRTLKITDWMPDDMNFSDVKQIHQTDTGSTLDTTGAGCAVATESMTFTLISVVMLLPGIW.

A signal peptide spans 1 to 24; that stretch reads MDAQTWPVGFRCLLLLALVGSARS. N-linked (GlcNAc...) asparagine glycans are attached at residues Asn120 and Asn237. Residues 355-375 are disordered; it reads SPRCSFDQSKEKHGMKTTTRN. 5 O-linked (Xyl...) (glycosaminoglycan) serine glycosylation sites follow: Ser441, Ser486, Ser495, Ser507, and Ser509. N-linked (GlcNAc...) asparagine glycosylation occurs at Asn527.

This sequence belongs to the glypican family. In adult, primarily expressed in the brain. Also detected in fetal brain, lung and liver.

It localises to the cell membrane. It is found in the secreted. Its subcellular location is the extracellular space. Cell surface proteoglycan that bears heparan sulfate. The protein is Glypican-5 (GPC5) of Homo sapiens (Human).